The sequence spans 143 residues: Large ribosomal subunit protein uL22c (143 aa).

The protein belongs to the universal ribosomal protein uL22 family. Part of the 50S ribosomal subunit.

The protein localises to the plastid. Its subcellular location is the chloroplast. This protein binds specifically to 23S rRNA. Its function is as follows. The globular domain of the protein is located near the polypeptide exit tunnel on the outside of the subunit, while an extended beta-hairpin is found that lines the wall of the exit tunnel in the center of the 70S ribosome. This chain is Large ribosomal subunit protein uL22c (rpl22), found in Piper cenocladum (Ant piper).